The primary structure comprises 89 residues: Small ribosomal subunit protein uS15 (89 aa).

This sequence belongs to the universal ribosomal protein uS15 family. In terms of assembly, part of the 30S ribosomal subunit. Forms a bridge to the 50S subunit in the 70S ribosome, contacting the 23S rRNA.

One of the primary rRNA binding proteins, it binds directly to 16S rRNA where it helps nucleate assembly of the platform of the 30S subunit by binding and bridging several RNA helices of the 16S rRNA. In terms of biological role, forms an intersubunit bridge (bridge B4) with the 23S rRNA of the 50S subunit in the ribosome. The protein is Small ribosomal subunit protein uS15 of Thermosynechococcus vestitus (strain NIES-2133 / IAM M-273 / BP-1).